Here is a 739-residue protein sequence, read N- to C-terminus: NAD(P)H-quinone oxidoreductase subunit 5, chloroplastic (739 aa).

16 helical membrane passes run 9 to 29 (WVIP…LILI), 39 to 59 (IWAF…VQLS), 89 to 109 (IDPL…LVLI), 125 to 145 (FVYI…SNLI), 147 to 167 (IYFF…FWFT), 185 to 205 (GDFG…SLEF), 219 to 239 (NGVN…GAVA), 258 to 278 (TPIS…FLLA), 280 to 300 (LLPL…VGTI), 327 to 347 (LGYM…FHLI), 354 to 374 (ALLF…VGYS), 396 to 416 (TTFL…CFWS), 425 to 445 (WLYS…TAFY), 542 to 562 (LFPL…GISF), 610 to 630 (TLAI…YSFF), and 719 to 739 (ISSY…FFLS).

It belongs to the complex I subunit 5 family. In terms of assembly, NDH is composed of at least 16 different subunits, 5 of which are encoded in the nucleus.

The protein resides in the plastid. Its subcellular location is the chloroplast thylakoid membrane. The enzyme catalyses a plastoquinone + NADH + (n+1) H(+)(in) = a plastoquinol + NAD(+) + n H(+)(out). It carries out the reaction a plastoquinone + NADPH + (n+1) H(+)(in) = a plastoquinol + NADP(+) + n H(+)(out). NDH shuttles electrons from NAD(P)H:plastoquinone, via FMN and iron-sulfur (Fe-S) centers, to quinones in the photosynthetic chain and possibly in a chloroplast respiratory chain. The immediate electron acceptor for the enzyme in this species is believed to be plastoquinone. Couples the redox reaction to proton translocation, and thus conserves the redox energy in a proton gradient. The polypeptide is NAD(P)H-quinone oxidoreductase subunit 5, chloroplastic (ndhF) (Triticum aestivum (Wheat)).